The chain runs to 423 residues: Methanol:N,N-dimethyl-4-nitrosoaniline oxidoreductase (423 aa).

Belongs to the iron-containing alcohol dehydrogenase family. As to quaternary structure, homodecamer. The cofactor is Mg(2+). Zn(2+) serves as cofactor. Requires NADPH as cofactor.

The catalysed reaction is methanol + A = formaldehyde + AH2. In terms of biological role, catalyzes the oxidation of methanol to yield formaldehyde. While the in vivo electron acceptor is not known, N,N-dimethyl-4-nitrosoaniline (NDMA) can serve this function in vitro and is reduced to 4-(hydroxylamino)-N,N-dimethylaniline. It is also able to use ethanol and formaldehyde with an activity comparable to methanol, and has a weak activity with methylamine as substrate. The protein is Methanol:N,N-dimethyl-4-nitrosoaniline oxidoreductase of Mycobacterium sp. (strain DSM 3803 / JC1).